The chain runs to 473 residues: Photosystem II CP43 reaction center protein (473 aa).

Residues 1–14 (MKTLYSLRRFYPVE) constitute a propeptide that is removed on maturation. Thr15 bears the N-acetylthreonine mark. Phosphothreonine is present on Thr15. 5 consecutive transmembrane segments (helical) span residues 69 to 93 (LFEV…PHLA), 134 to 155 (LLGP…KDRN), 178 to 200 (KALY…RRIT), 255 to 275 (KPFA…LSYS), and 291 to 312 (WFNN…ASQA). Glu367 is a [CaMn4O5] cluster binding site. Residues 447 to 471 (RARAAAAGFEKGIDRDFEPVLSMTP) traverse the membrane as a helical segment.

The protein belongs to the PsbB/PsbC family. PsbC subfamily. PSII is composed of 1 copy each of membrane proteins PsbA, PsbB, PsbC, PsbD, PsbE, PsbF, PsbH, PsbI, PsbJ, PsbK, PsbL, PsbM, PsbT, PsbX, PsbY, PsbZ, Psb30/Ycf12, at least 3 peripheral proteins of the oxygen-evolving complex and a large number of cofactors. It forms dimeric complexes. Requires Binds multiple chlorophylls and provides some of the ligands for the Ca-4Mn-5O cluster of the oxygen-evolving complex. It may also provide a ligand for a Cl- that is required for oxygen evolution. PSII binds additional chlorophylls, carotenoids and specific lipids. as cofactor.

Its subcellular location is the plastid. It localises to the chloroplast thylakoid membrane. Functionally, one of the components of the core complex of photosystem II (PSII). It binds chlorophyll and helps catalyze the primary light-induced photochemical processes of PSII. PSII is a light-driven water:plastoquinone oxidoreductase, using light energy to abstract electrons from H(2)O, generating O(2) and a proton gradient subsequently used for ATP formation. In Illicium oligandrum (Star anise), this protein is Photosystem II CP43 reaction center protein.